The primary structure comprises 305 residues: Testis-expressed protein 52 (305 aa).

The disordered stretch occupies residues His284 to Phe305. The span at Pro294–Phe305 shows a compositional bias: basic residues.

As to expression, expressed in Testis.

The chain is Testis-expressed protein 52 from Homo sapiens (Human).